The following is an 855-amino-acid chain: Leucine--tRNA ligase (855 aa).

A 'HIGH' region motif is present at residues 42–52 (PYPSGSLHVGH). A disordered region spans residues 292 to 311 (SEMDRTAEDKPKKGIPTGGK). Basic and acidic residues predominate over residues 293–303 (EMDRTAEDKPK). Residues 614–618 (KMSKS) carry the 'KMSKS' region motif. Residue lysine 617 participates in ATP binding.

This sequence belongs to the class-I aminoacyl-tRNA synthetase family.

It localises to the cytoplasm. It carries out the reaction tRNA(Leu) + L-leucine + ATP = L-leucyl-tRNA(Leu) + AMP + diphosphate. This Acaryochloris marina (strain MBIC 11017) protein is Leucine--tRNA ligase.